Reading from the N-terminus, the 550-residue chain is Glucose-6-phosphate isomerase 2 (550 aa).

The Proton donor role is filled by E357. Residues H388 and K514 contribute to the active site. Residues 527-550 (DTGALGHDSSTNGLIRHYRERHGK) are disordered.

This sequence belongs to the GPI family.

It is found in the cytoplasm. It carries out the reaction alpha-D-glucose 6-phosphate = beta-D-fructose 6-phosphate. It participates in carbohydrate biosynthesis; gluconeogenesis. It functions in the pathway carbohydrate degradation; glycolysis; D-glyceraldehyde 3-phosphate and glycerone phosphate from D-glucose: step 2/4. In terms of biological role, catalyzes the reversible isomerization of glucose-6-phosphate to fructose-6-phosphate. The sequence is that of Glucose-6-phosphate isomerase 2 from Chromobacterium violaceum (strain ATCC 12472 / DSM 30191 / JCM 1249 / CCUG 213 / NBRC 12614 / NCIMB 9131 / NCTC 9757 / MK).